The chain runs to 454 residues: GTPase Obg (454 aa).

Residues 2–159 form the Obg domain; the sequence is SDFVDEAVLH…VDIRLELKTI (158 aa). Residues 60–87 form a disordered region; sequence YQRRPHRKAENGAPGQGSNRSGASGADL. In terms of domain architecture, OBG-type G spans 160–335; the sequence is ADVGLVGFPS…LAYALGEQVA (176 aa). Residues 166 to 173, 191 to 195, 212 to 215, 287 to 290, and 316 to 318 each bind GTP; these read GFPSAGKS, FTTLV, DVPG, NKID, and SAA. 2 residues coordinate Mg(2+): Ser-173 and Thr-193. In terms of domain architecture, OCT spans 353–435; it reads PREIGEIPFQ…DNPVVFDWDP (83 aa).

The protein belongs to the TRAFAC class OBG-HflX-like GTPase superfamily. OBG GTPase family. As to quaternary structure, monomer. Mg(2+) serves as cofactor.

The protein localises to the cytoplasm. Its function is as follows. An essential GTPase which binds GTP, GDP and possibly (p)ppGpp with moderate affinity, with high nucleotide exchange rates and a fairly low GTP hydrolysis rate. Plays a role in control of the cell cycle, stress response, ribosome biogenesis and in those bacteria that undergo differentiation, in morphogenesis control. The sequence is that of GTPase Obg from Thermobifida fusca (strain YX).